The primary structure comprises 109 residues: UPF0060 membrane protein mma_0129 (109 aa).

A run of 4 helical transmembrane segments spans residues 7 to 27 (VALF…PYLW), 31 to 51 (GASI…VWLL), 63 to 83 (AAYG…VDGI), and 87 to 107 (NWDF…LFAP).

It belongs to the UPF0060 family.

It is found in the cell inner membrane. In Janthinobacterium sp. (strain Marseille) (Minibacterium massiliensis), this protein is UPF0060 membrane protein mma_0129.